The sequence spans 143 residues: Large ribosomal subunit protein uL11 (143 aa).

This sequence belongs to the universal ribosomal protein uL11 family. Part of the ribosomal stalk of the 50S ribosomal subunit. Interacts with L10 and the large rRNA to form the base of the stalk. L10 forms an elongated spine to which L12 dimers bind in a sequential fashion forming a multimeric L10(L12)X complex. One or more lysine residues are methylated.

Forms part of the ribosomal stalk which helps the ribosome interact with GTP-bound translation factors. The chain is Large ribosomal subunit protein uL11 from Caulobacter vibrioides (strain ATCC 19089 / CIP 103742 / CB 15) (Caulobacter crescentus).